A 1025-amino-acid chain; its full sequence is DNA repair protein RAD5 (1025 aa).

Over residues 1–12 (MEPRQKKARFFD) the composition is skewed to basic and acidic residues. 3 disordered regions span residues 1–49 (MEPR…PAPS), 93–133 (QQAT…VHTR), and 314–336 (RAKSQPPSSQPPSQNSEDESEPI). 2 stretches are compositionally biased toward polar residues: residues 37–49 (ASNSLARPTPAPS) and 113–127 (GFETTQKPSQNTQVP). The segment covering 317-328 (SQPPSSQPPSQN) has biased composition (low complexity). Residues 427–607 (PKQERSFSGG…FSILKFLGAA (181 aa)) form the Helicase ATP-binding domain. ATP is bound at residue 440–447 (DEMGLGKT). The DEAH box signature appears at 558 to 561 (DEAH). The segment at 782 to 826 (CPICAEDVTKLAISKCLHMGCVDCLADNVRFQESKKQTPVCCICR) adopts an RING-type zinc-finger fold. In terms of domain architecture, Helicase C-terminal spans 860-1012 (KLVALVSKLK…TLGMSEQEQK (153 aa)).

This sequence belongs to the SNF2/RAD54 helicase family.

The protein resides in the cytoplasm. It is found in the nucleus. In terms of biological role, probable helicase, member of the UBC2/RAD6 epistasis group. Functions with DNA repair protein RAD18 in error-free postreplication DNA repair. Involved in the maintenance of wild-type rates of instability of simple repetitive sequences such as poly(GT) repeats. Seems to be involved in maintaining a balance which acts in favor of error-prone non-homologous joining during DNA double-strand breaks repairs. This Yarrowia lipolytica (strain CLIB 122 / E 150) (Yeast) protein is DNA repair protein RAD5 (RAD5).